The following is a 73-amino-acid chain: Translation initiation factor IF-1 (73 aa).

An S1-like domain is found at 1 to 73 (MAKKDGVIEI…TRGRIVYRYK (73 aa)).

The protein belongs to the IF-1 family. Component of the 30S ribosomal translation pre-initiation complex which assembles on the 30S ribosome in the order IF-2 and IF-3, IF-1 and N-formylmethionyl-tRNA(fMet); mRNA recruitment can occur at any time during PIC assembly.

The protein localises to the cytoplasm. One of the essential components for the initiation of protein synthesis. Stabilizes the binding of IF-2 and IF-3 on the 30S subunit to which N-formylmethionyl-tRNA(fMet) subsequently binds. Helps modulate mRNA selection, yielding the 30S pre-initiation complex (PIC). Upon addition of the 50S ribosomal subunit IF-1, IF-2 and IF-3 are released leaving the mature 70S translation initiation complex. This Leifsonia xyli subsp. xyli (strain CTCB07) protein is Translation initiation factor IF-1.